The chain runs to 1158 residues: Rho1 guanine nucleotide exchange factor 2 (1158 aa).

The disordered stretch occupies residues 42–141 (RSSGSITHSP…SFSVSDVSNG (100 aa)). Residues 45 to 63 (GSITHSPTALSSTTSLNEN) show a composition bias toward polar residues. Residues 68–81 (FRPASSLSFSPSSL) are compositionally biased toward low complexity. Over residues 97–108 (KNNFYRRSSSTD) the composition is skewed to polar residues. Residues 132–141 (SFSVSDVSNG) are compositionally biased toward low complexity. The DH domain maps to 447–634 (KRQEIIFEVI…REFLTKLNYE (188 aa)). Residues 670-805 (LIFKGVVKLK…QHIEKQQDII (136 aa)) form the PH domain. Phosphoserine is present on residues serine 746 and serine 747. In terms of domain architecture, CNH spans 825–1120 (GNKLLCAVAY…KLLTDGRGLI (296 aa)).

It localises to the cytoplasm. Functionally, stimulates the exchange of Rho1 and Rho5 GDP-bound form into GTP-bound form. Controls septum formation, cell wall synthesis and localization of F-actin patches. The sequence is that of Rho1 guanine nucleotide exchange factor 2 (rgf2) from Schizosaccharomyces pombe (strain 972 / ATCC 24843) (Fission yeast).